Consider the following 394-residue polypeptide: Elongation factor Tu (394 aa).

The 195-residue stretch at 10–204 (KPHVNVGTIG…ALDTYIPEPE (195 aa)) folds into the tr-type G domain. Positions 19 to 26 (GHVDHGKT) are G1. GTP is bound at residue 19-26 (GHVDHGKT). Position 26 (threonine 26) interacts with Mg(2+). A G2 region spans residues 60 to 64 (GITIN). The G3 stretch occupies residues 81-84 (DCPG). GTP-binding positions include 81–85 (DCPGH) and 136–139 (NKCD). The segment at 136–139 (NKCD) is G4. A G5 region spans residues 174 to 176 (SAL).

This sequence belongs to the TRAFAC class translation factor GTPase superfamily. Classic translation factor GTPase family. EF-Tu/EF-1A subfamily. In terms of assembly, monomer.

It is found in the cytoplasm. The catalysed reaction is GTP + H2O = GDP + phosphate + H(+). Functionally, GTP hydrolase that promotes the GTP-dependent binding of aminoacyl-tRNA to the A-site of ribosomes during protein biosynthesis. The chain is Elongation factor Tu from Shewanella halifaxensis (strain HAW-EB4).